The sequence spans 217 residues: Ribonuclease HII (217 aa).

In terms of domain architecture, RNase H type-2 spans 17–207 (KVIYGVDEAG…CVGQSVSGAR (191 aa)). Residues Asp23, Glu24, and Asp116 each coordinate a divalent metal cation.

It belongs to the RNase HII family. Mn(2+) is required as a cofactor. It depends on Mg(2+) as a cofactor.

The protein localises to the cytoplasm. It carries out the reaction Endonucleolytic cleavage to 5'-phosphomonoester.. Its function is as follows. Endonuclease that specifically degrades the RNA of RNA-DNA hybrids. The polypeptide is Ribonuclease HII (Nitrosomonas europaea (strain ATCC 19718 / CIP 103999 / KCTC 2705 / NBRC 14298)).